The primary structure comprises 160 residues: uncharacterized protein (160 aa).

A coiled-coil region spans residues 69–145 (NQLLNMMAQA…EQREHVKEQR (77 aa)). Disordered stretches follow at residues 82 to 109 (GVRL…LKNA) and 129 to 160 (KKKQ…HRGK). Positions 86 to 99 (QGRRQKKINPKRLQ) are enriched in basic residues. The segment covering 133-146 (IMKEQREHVKEQRY) has biased composition (basic and acidic residues). Basic residues predominate over residues 147-160 (MLKKQKAKKKHRGK).

This is an uncharacterized protein from Bacillus subtilis (strain 168).